The sequence spans 382 residues: MKIIVLLLLAVVLASADQTAPGTASRPILTASESNYFTTATYLQGWSPPSISTSKADYTVGNGYNTIQAAVNAAINTGGTTRKYIKINAGTYQEVVYIPNTKVPLTIYGGGSSPSDTLITLNMPAQTTPSAYKSLVGSLFNSADPAYSMYNSCASKSGTIGTSCSTVFWVKAPAVQIVNLSIENSAKNTGDQQAVALQTNSDQIQIHNARLLGHQDTLYAGSGSSSVERSYYTNTYIEGDIDFVFGGGSAIFESCTFYVKADRRSDTAVVFAPDTDPHKMYGYFVYKSTITGDSAWSSSKKAYLGRAWDSGVSSSSAYVPGTSPNGQLIIKESTIDGIINTSGPWTTATSGRTYSGNNANSRDLNNDNYNRFWEYNNSGNGA.

Residues 1 to 16 form the signal peptide; sequence MKIIVLLLLAVVLASA. A disulfide bond links Cys-153 and Cys-164. The N-linked (GlcNAc...) asparagine glycan is linked to Asn-179. Position 193 (Gln-193) interacts with substrate. Asp-216 acts as the Proton donor in catalysis. Asp-242 acts as the Nucleophile in catalysis. Substrate contacts are provided by Arg-306 and Trp-308. N-linked (GlcNAc...) asparagine glycans are attached at residues Asn-340 and Asn-376.

The protein belongs to the pectinesterase family. As to expression, expressed throughout the midgut with particularly strong expression in the ventriculus.

It localises to the secreted. The catalysed reaction is [(1-&gt;4)-alpha-D-galacturonosyl methyl ester](n) + n H2O = [(1-&gt;4)-alpha-D-galacturonosyl](n) + n methanol + n H(+). Its pathway is glycan metabolism; pectin degradation; 2-dehydro-3-deoxy-D-gluconate from pectin: step 1/5. Pectinesterase which probably plays an important role in the digestion of plant cell walls. The chain is Pectinesterase from Sitophilus oryzae (Rice weevil).